The primary structure comprises 248 residues: Membrane-spanning 4-domains subfamily A member 6A (248 aa).

Residues 1–46 (MTSQPVPNETIIVLPSNVINFSQAEKPEPTNQGQDSLKKHLHAEIK) are Cytoplasmic-facing. Residues 47–67 (VIGTIQILCGMMVLSLGIILA) form a helical membrane-spanning segment. Residues 68-84 (SASFSPNFTQVTSTLLN) are Extracellular-facing. A helical transmembrane segment spans residues 85-105 (SAYPFIGPFFFIISGSLSIAT). Residues 106–116 (EKRLTKLLVHS) lie on the Cytoplasmic side of the membrane. The helical transmembrane segment at 117-137 (SLVGSILSALSALVGFIILSV) threads the bilayer. Residues 138 to 185 (KQATLNPASLQCELDKNNIPTRSYVSYFYHDSLYTTDCYTAKASLAGT) are Extracellular-facing. A helical transmembrane segment spans residues 186–206 (LSLMLICTLLEFCLAVLTAVL). Over 207 to 248 (RWKQAYSDFPGSVLFLPHSYIGNSGMSSKMTHDCGYEELLTS) the chain is Cytoplasmic.

Belongs to the MS4A family. As to expression, variable expression in some B-cell, myelomonocytic, and erythroleukemia cell lines.

The protein resides in the membrane. In terms of biological role, may be involved in signal transduction as a component of a multimeric receptor complex. The sequence is that of Membrane-spanning 4-domains subfamily A member 6A (MS4A6A) from Homo sapiens (Human).